Consider the following 150-residue polypeptide: MNNKVGLAHSLRDGQKYMDTWPMRKELSAIFPEQRIIKATRFGIKVMPAIAAISVLTQMAFNNYQALPQAIVMALFALSLPLQGMWWLGHRSNTQLPPALATWYRELHQKIVESGSALEPLKSRPRYKELAHTLNRAFRHLDKSALERWF.

2 helical membrane-spanning segments follow: residues 42–62 (FGIK…MAFN) and 70–90 (AIVM…WLGH).

It belongs to the UPF0208 family.

It localises to the cell inner membrane. This chain is UPF0208 membrane protein VV1_2222, found in Vibrio vulnificus (strain CMCP6).